A 492-amino-acid chain; its full sequence is Probable glycine dehydrogenase (decarboxylating) subunit 2 (492 aa).

Position 274 is an N6-(pyridoxal phosphate)lysine (Lys-274).

It belongs to the GcvP family. C-terminal subunit subfamily. The glycine cleavage system is composed of four proteins: P, T, L and H. In this organism, the P 'protein' is a heterodimer of two subunits. The cofactor is pyridoxal 5'-phosphate.

It catalyses the reaction N(6)-[(R)-lipoyl]-L-lysyl-[glycine-cleavage complex H protein] + glycine + H(+) = N(6)-[(R)-S(8)-aminomethyldihydrolipoyl]-L-lysyl-[glycine-cleavage complex H protein] + CO2. Its function is as follows. The glycine cleavage system catalyzes the degradation of glycine. The P protein binds the alpha-amino group of glycine through its pyridoxal phosphate cofactor; CO(2) is released and the remaining methylamine moiety is then transferred to the lipoamide cofactor of the H protein. In Exiguobacterium sibiricum (strain DSM 17290 / CCUG 55495 / CIP 109462 / JCM 13490 / 255-15), this protein is Probable glycine dehydrogenase (decarboxylating) subunit 2.